The chain runs to 105 residues: uncharacterized protein (105 aa).

This is an uncharacterized protein from Rickettsia prowazekii (strain Madrid E).